The primary structure comprises 336 residues: Glycerol-3-phosphate dehydrogenase [NAD(P)+] (336 aa).

Positions 16, 17, 37, and 111 each coordinate NADPH. 3 residues coordinate sn-glycerol 3-phosphate: Lys-111, Gly-140, and Thr-142. Position 144 (Ala-144) interacts with NADPH. Positions 196, 249, 259, 260, and 261 each coordinate sn-glycerol 3-phosphate. Lys-196 serves as the catalytic Proton acceptor. Position 260 (Arg-260) interacts with NADPH. Residues Val-284 and Glu-286 each coordinate NADPH.

This sequence belongs to the NAD-dependent glycerol-3-phosphate dehydrogenase family.

The protein localises to the cytoplasm. It carries out the reaction sn-glycerol 3-phosphate + NAD(+) = dihydroxyacetone phosphate + NADH + H(+). The catalysed reaction is sn-glycerol 3-phosphate + NADP(+) = dihydroxyacetone phosphate + NADPH + H(+). Its pathway is membrane lipid metabolism; glycerophospholipid metabolism. In terms of biological role, catalyzes the reduction of the glycolytic intermediate dihydroxyacetone phosphate (DHAP) to sn-glycerol 3-phosphate (G3P), the key precursor for phospholipid synthesis. The sequence is that of Glycerol-3-phosphate dehydrogenase [NAD(P)+] from Glaesserella parasuis serovar 5 (strain SH0165) (Haemophilus parasuis).